The sequence spans 546 residues: 2-isopropylmalate synthase (546 aa).

Residues 8–271 enclose the Pyruvate carboxyltransferase domain; it reads ILIFDTTLRD…NSFFGRSSDS (264 aa). Residues D17, H208, H210, and N244 each contribute to the Mn(2+) site. Residues 408–546 form a regulatory domain region; that stretch reads QLSHVQVSCG…KNKVLSNPKK (139 aa).

Belongs to the alpha-IPM synthase/homocitrate synthase family. LeuA type 1 subfamily. As to quaternary structure, homodimer. Mn(2+) is required as a cofactor.

The protein localises to the cytoplasm. It catalyses the reaction 3-methyl-2-oxobutanoate + acetyl-CoA + H2O = (2S)-2-isopropylmalate + CoA + H(+). The protein operates within amino-acid biosynthesis; L-leucine biosynthesis; L-leucine from 3-methyl-2-oxobutanoate: step 1/4. In terms of biological role, catalyzes the condensation of the acetyl group of acetyl-CoA with 3-methyl-2-oxobutanoate (2-ketoisovalerate) to form 3-carboxy-3-hydroxy-4-methylpentanoate (2-isopropylmalate). In Prochlorococcus marinus subsp. pastoris (strain CCMP1986 / NIES-2087 / MED4), this protein is 2-isopropylmalate synthase.